A 519-amino-acid chain; its full sequence is Carboxyl-terminal-processing peptidase 3, chloroplastic (519 aa).

One can recognise a PDZ domain in the interval 186-274; that stretch reads YQSFRIGSDG…IKLKNVNGSG (89 aa). Active-site charge relay system residues include serine 407 and lysine 432.

This sequence belongs to the peptidase S41A family.

Its subcellular location is the plastid. It localises to the chloroplast thylakoid lumen. It carries out the reaction The enzyme shows specific recognition of a C-terminal tripeptide, Xaa-Yaa-Zaa, in which Xaa is preferably Ala or Leu, Yaa is preferably Ala or Tyr, and Zaa is preferably Ala, but then cleaves at a variable distance from the C-terminus. A typical cleavage is -Ala-Ala-|-Arg-Ala-Ala-Lys-Glu-Asn-Tyr-Ala-Leu-Ala-Ala.. Its function is as follows. Protease involved in the C-terminal processing of the chloroplastic D1 protein of photosystem II. This proteolytic processing is necessary to allow the light-driven assembly of the tetranuclear manganese cluster, which is responsible for photosynthetic water oxidation. The protein is Carboxyl-terminal-processing peptidase 3, chloroplastic (CTPA3) of Arabidopsis thaliana (Mouse-ear cress).